The chain runs to 315 residues: Neuroguidin (315 aa).

Alanine 2 bears the N-acetylalanine mark. Positions 7–41 (LESDVSSSITLLKNLQEQVMAVTAQIQALTTKVRA) form a coiled coil. The segment at 41–174 (AGTYSTEKGL…KGSAKKYVPP (134 aa)) is necessary for interaction with EIF4E. Serine 121, serine 142, and serine 143 each carry phosphoserine. Residues 123-190 (SENDPLRFKP…YDETEAEREQ (68 aa)) are disordered. The segment covering 144-155 (EDEEESEAEEGQ) has biased composition (acidic residues). Positions 180-190 (HYDETEAEREQ) are enriched in basic and acidic residues. Residues 181-203 (YDETEAEREQKRLEKAKRRALSS) are a coiled coil. Serine 204 and serine 214 each carry phosphoserine. 2 stretches are compositionally biased toward basic and acidic residues: residues 212-225 (QYSD…DARH) and 232-241 (SQEDQHRVNY). Disordered stretches follow at residues 212–243 (QYSD…NYEE) and 284–315 (GTAH…RRRW). Residues 295-315 (VKKRKKLPKKGRKKKGFRRRW) are compositionally biased toward basic residues.

The protein belongs to the SAS10 family. In terms of assembly, interacts with CPEB1 and EIF4E. As to expression, expressed in testis, ovary, spleen, kidney, hippocampus and cerebellum (at protein level). Expressed in testis, ovary, spleen, kidney, brain.

The protein resides in the nucleus. The protein localises to the nucleolus. Its subcellular location is the chromosome. It is found in the centromere. It localises to the cytoplasm. The protein resides in the cell projection. The protein localises to the axon. Its subcellular location is the dendrite. It is found in the filopodium. In terms of biological role, part of the small subunit (SSU) processome, first precursor of the small eukaryotic ribosomal subunit. During the assembly of the SSU processome in the nucleolus, many ribosome biogenesis factors, an RNA chaperone and ribosomal proteins associate with the nascent pre-rRNA and work in concert to generate RNA folding, modifications, rearrangements and cleavage as well as targeted degradation of pre-ribosomal RNA by the RNA exosome. Its dissociation from the complex determines the transition from state pre-A1 to state pre-A1*. Inhibits mRNA translation in a cytoplasmic polyadenylation element (CPE)-dependent manner. The polypeptide is Neuroguidin (Ngdn) (Mus musculus (Mouse)).